The sequence spans 398 residues: 1-deoxy-D-xylulose 5-phosphate reductoisomerase (398 aa).

8 residues coordinate NADPH: Thr10, Gly11, Ser12, Ile13, Gly36, Arg37, Asn38, and Asn124. 1-deoxy-D-xylulose 5-phosphate is bound at residue Lys125. Glu126 is a binding site for NADPH. Residue Asp150 coordinates Mn(2+). 4 residues coordinate 1-deoxy-D-xylulose 5-phosphate: Ser151, Glu152, Ser186, and His209. Mn(2+) is bound at residue Glu152. Gly215 contacts NADPH. 1-deoxy-D-xylulose 5-phosphate contacts are provided by Ser222, Asn227, Lys228, and Glu231. Glu231 serves as a coordination point for Mn(2+).

It belongs to the DXR family. In terms of assembly, homodimer. Mg(2+) serves as cofactor. It depends on Mn(2+) as a cofactor.

It carries out the reaction 2-C-methyl-D-erythritol 4-phosphate + NADP(+) = 1-deoxy-D-xylulose 5-phosphate + NADPH + H(+). It functions in the pathway isoprenoid biosynthesis; isopentenyl diphosphate biosynthesis via DXP pathway; isopentenyl diphosphate from 1-deoxy-D-xylulose 5-phosphate: step 1/6. Catalyzes the NADPH-dependent rearrangement and reduction of 1-deoxy-D-xylulose-5-phosphate (DXP) to 2-C-methyl-D-erythritol 4-phosphate (MEP). This chain is 1-deoxy-D-xylulose 5-phosphate reductoisomerase, found in Yersinia pseudotuberculosis serotype O:1b (strain IP 31758).